The primary structure comprises 331 residues: Phosphoribosylformylglycinamidine cyclo-ligase (331 aa).

Belongs to the AIR synthase family.

It is found in the cytoplasm. The catalysed reaction is 2-formamido-N(1)-(5-O-phospho-beta-D-ribosyl)acetamidine + ATP = 5-amino-1-(5-phospho-beta-D-ribosyl)imidazole + ADP + phosphate + H(+). It participates in purine metabolism; IMP biosynthesis via de novo pathway; 5-amino-1-(5-phospho-D-ribosyl)imidazole from N(2)-formyl-N(1)-(5-phospho-D-ribosyl)glycinamide: step 2/2. In Clostridium kluyveri (strain NBRC 12016), this protein is Phosphoribosylformylglycinamidine cyclo-ligase.